Consider the following 177-residue polypeptide: Putative acetyltransferase FG08082 (177 aa).

The N-acetyltransferase domain maps to 81 to 174 (EEWEQVGLVR…VSIAMVEGPG (94 aa)).

The protein belongs to the acetyltransferase family.

Its pathway is mycotoxin biosynthesis. Putative acetyltransferase; part of the gene cluster that mediates the biosynthesis of butenolide, a mycotoxin that shows antibiotic activity but does not seem to play a major role in the spread of head blight in wheat. Butenolide is derived from glutamic acid via a 4-acetamido-2-butenoic acid intermediate. The predicted function of the NADH:flavin oxidoreductase FG08077, the cytochrome P450 monooxygenase FG08079, the decarboxylase FG08083, and the putative acetyltransferase FG08082 are consistent with this pathway, however, the respective activities of the butelonide biosynthesis cluster enzymes have still to be experimentally determined. The protein is Putative acetyltransferase FG08082 of Gibberella zeae (strain ATCC MYA-4620 / CBS 123657 / FGSC 9075 / NRRL 31084 / PH-1) (Wheat head blight fungus).